We begin with the raw amino-acid sequence, 346 residues long: MALKHMQIFLFVAIFSSFCFSITLSRPLDNELIMQKRHIEWMTKHGRVYADVKEENNRYVVFKNNVERIEHLNSIPAGRTFKLAVNQFADLTNDEFRSMYTGFKGVSALSSQSQTKMSPFRYQNVSSGALPVSVDWRKKGAVTPIKNQGSCGCCWAFSAVAAIEGATQIKKGKLISLSEQQLVDCDTNDFGCEGGLMDTAFEHIKATGGLTTESNYPYKGEDATCNSKKTNPKATSITGYEDVPVNDEQALMKAVAHQPVSVGIEGGGFDFQFYSSGVFTGECTTYLDHAVTAIGYGESTNGSKYWIIKNSWGTKWGESGYMRIQKDVKDKQGLCGLAMKASYPTI.

The first 25 residues, 1–25 (MALKHMQIFLFVAIFSSFCFSITLS), serve as a signal peptide directing secretion. A glycan (N-linked (GlcNAc...) asparagine) is linked at asparagine 124. Disulfide bonds link cysteine 151–cysteine 192, cysteine 185–cysteine 225, and cysteine 283–cysteine 335. The active site involves cysteine 154. Histidine 289 is an active-site residue. Asparagine 301 is a glycosylation site (N-linked (GlcNAc...) asparagine). Residue asparagine 310 is part of the active site.

Belongs to the peptidase C1 family. Found in senescent leaves, especially in senescence-associated vacuoles- (SAVs) containing cells (e.g. mesophyll and guard cells), and in senescencing ovules of unfertilised pistils.

The protein resides in the vacuole. In terms of biological role, cysteine protease that may have a developmental senescence specific cell death function during apoptosis, heavy metal detoxification, and hypersensitive response. The polypeptide is Senescence-specific cysteine protease SAG12 (Arabidopsis thaliana (Mouse-ear cress)).